The chain runs to 216 residues: MATDSRTSWLLTVSLLCLLWPQEASAFPAMPLSSLFSNAVLRAQHLHQLAADTYKEFERAYIPEGQRYSIQNAQAAFCFSETIPAPTGKEEAQQRTDMELLRFSLLLIQSWLGPVQFLSRIFTNSLMFGTSDRVYEKLKDLEEGIQALMQELEDGSPRVGQILKQTYDKFDANMRSDDALLKNYGLLSCFKKDLHKAETYLRVMKCRRFVESSCAF.

The signal sequence occupies residues 1 to 26; that stretch reads MATDSRTSWLLTVSLLCLLWPQEASA. Histidine 45 is a binding site for Zn(2+). An intrachain disulfide couples cysteine 78 to cysteine 189. The residue at position 131 (serine 131) is a Phosphoserine. A Zn(2+)-binding site is contributed by glutamate 198. Cysteine 206 and cysteine 214 form a disulfide bridge.

Belongs to the somatotropin/prolactin family.

It localises to the secreted. In terms of biological role, plays an important role in growth control. Its major role in stimulating body growth is to stimulate the liver and other tissues to secrete IGF1. It stimulates both the differentiation and proliferation of myoblasts. It also stimulates amino acid uptake and protein synthesis in muscle and other tissues. The chain is Somatotropin (Gh1) from Mus musculus (Mouse).